A 284-amino-acid chain; its full sequence is Thymidylate synthase (284 aa).

A dUMP-binding site is contributed by arginine 34. Position 64 (histidine 64) interacts with (6R)-5,10-methylene-5,6,7,8-tetrahydrofolate. Residue 139–140 (RR) coordinates dUMP. Cysteine 159 (nucleophile) is an active-site residue. Residues 186–189 (RSAD), asparagine 197, and 227–229 (HIY) each bind dUMP. Aspartate 189 is a (6R)-5,10-methylene-5,6,7,8-tetrahydrofolate binding site. Alanine 283 provides a ligand contact to (6R)-5,10-methylene-5,6,7,8-tetrahydrofolate.

It belongs to the thymidylate synthase family. Bacterial-type ThyA subfamily. As to quaternary structure, homodimer.

It localises to the cytoplasm. The enzyme catalyses dUMP + (6R)-5,10-methylene-5,6,7,8-tetrahydrofolate = 7,8-dihydrofolate + dTMP. Its pathway is pyrimidine metabolism; dTTP biosynthesis. Catalyzes the reductive methylation of 2'-deoxyuridine-5'-monophosphate (dUMP) to 2'-deoxythymidine-5'-monophosphate (dTMP) while utilizing 5,10-methylenetetrahydrofolate (mTHF) as the methyl donor and reductant in the reaction, yielding dihydrofolate (DHF) as a by-product. This enzymatic reaction provides an intracellular de novo source of dTMP, an essential precursor for DNA biosynthesis. The polypeptide is Thymidylate synthase (Polaromonas sp. (strain JS666 / ATCC BAA-500)).